The sequence spans 648 residues: Macrolide export ATP-binding/permease protein MacB (648 aa).

The ABC transporter domain maps to 5–243; that stretch reads LELKDIRRSY…AGGTEPVVNT (239 aa). 41–48 is an ATP binding site; sequence GASGSGKS. A run of 4 helical transmembrane segments spans residues 273–293, 523–543, 576–596, and 600–620; these read LLTMLGIIIGIASVVSIVVVG, LFLTLVAVISLVVGGIGVMNI, AVLVCLVGGALGITLSLLIAF, and LFLPGWEIGFSPLALLLAFLC.

This sequence belongs to the ABC transporter superfamily. Macrolide exporter (TC 3.A.1.122) family. In terms of assembly, homodimer. Part of the tripartite efflux system MacAB-TolC, which is composed of an inner membrane transporter, MacB, a periplasmic membrane fusion protein, MacA, and an outer membrane component, TolC. The complex forms a large protein conduit and can translocate molecules across both the inner and outer membranes. Interacts with MacA.

Its subcellular location is the cell inner membrane. Its function is as follows. Part of the tripartite efflux system MacAB-TolC. MacB is a non-canonical ABC transporter that contains transmembrane domains (TMD), which form a pore in the inner membrane, and an ATP-binding domain (NBD), which is responsible for energy generation. Confers resistance against macrolides. This chain is Macrolide export ATP-binding/permease protein MacB, found in Shigella flexneri.